The primary structure comprises 93 residues: uncharacterized protein (93 aa).

A helical transmembrane segment spans residues 12–32 (VVGGLSFWTFSAGLIMIVNAL). The tract at residues 47–66 (TANANGSDDDNENKNNSYRS) is disordered.

It localises to the cell membrane. This is an uncharacterized protein from Mycoplasma genitalium (strain ATCC 33530 / DSM 19775 / NCTC 10195 / G37) (Mycoplasmoides genitalium).